Consider the following 117-residue polypeptide: Holo-[acyl-carrier-protein] synthase (117 aa).

Aspartate 6 and glutamate 55 together coordinate Mg(2+).

It belongs to the P-Pant transferase superfamily. AcpS family. It depends on Mg(2+) as a cofactor.

Its subcellular location is the cytoplasm. The enzyme catalyses apo-[ACP] + CoA = holo-[ACP] + adenosine 3',5'-bisphosphate + H(+). Transfers the 4'-phosphopantetheine moiety from coenzyme A to a Ser of acyl-carrier-protein. The sequence is that of Holo-[acyl-carrier-protein] synthase from Chlorobaculum parvum (strain DSM 263 / NCIMB 8327) (Chlorobium vibrioforme subsp. thiosulfatophilum).